A 228-amino-acid chain; its full sequence is A-type ATP synthase subunit D (228 aa).

Residues 205-214 (KKEEEEKAEA) are compositionally biased toward basic and acidic residues. The disordered stretch occupies residues 205 to 228 (KKEEEEKAEAAAEAAAVEDPEPAD).

This sequence belongs to the V-ATPase D subunit family. Has multiple subunits with at least A(3), B(3), C, D, E, F, H, I and proteolipid K(x).

The protein resides in the cell membrane. Functionally, component of the A-type ATP synthase that produces ATP from ADP in the presence of a proton gradient across the membrane. The protein is A-type ATP synthase subunit D of Halorubrum lacusprofundi (strain ATCC 49239 / DSM 5036 / JCM 8891 / ACAM 34).